The following is a 146-amino-acid chain: Small ribosomal subunit protein bS16 (146 aa).

Residues 84-102 (SHLEAQKAAVERLGRRKDY) show a composition bias toward basic and acidic residues. The tract at residues 84–146 (SHLEAQKAAV…DAPAAEATTE (63 aa)) is disordered. Over residues 110-119 (APKAAPVAEA) the composition is skewed to low complexity. Residues 120–130 (PAEEAPAEEPA) show a composition bias toward acidic residues. Residues 131-146 (AEASTDDAPAAEATTE) show a composition bias toward low complexity.

The protein belongs to the bacterial ribosomal protein bS16 family.

The chain is Small ribosomal subunit protein bS16 from Rhodopirellula baltica (strain DSM 10527 / NCIMB 13988 / SH1).